Reading from the N-terminus, the 331-residue chain is Ketol-acid reductoisomerase (NADP(+)) (331 aa).

Residues 2-182 (AKLFYDSDAD…GGTRAGILET (181 aa)) enclose the KARI N-terminal Rossmann domain. NADP(+)-binding positions include 25-28 (YGSQ), serine 51, serine 53, and 83-86 (DEFQ). Residue histidine 108 is part of the active site. Glycine 134 provides a ligand contact to NADP(+). One can recognise a KARI C-terminal knotted domain in the interval 183-328 (NFKEETETDL…KTLRSMFSWL (146 aa)). Mg(2+)-binding residues include aspartate 191, glutamate 195, glutamate 227, and glutamate 231. Substrate is bound at residue serine 252.

Belongs to the ketol-acid reductoisomerase family. The cofactor is Mg(2+).

It carries out the reaction (2R)-2,3-dihydroxy-3-methylbutanoate + NADP(+) = (2S)-2-acetolactate + NADPH + H(+). The enzyme catalyses (2R,3R)-2,3-dihydroxy-3-methylpentanoate + NADP(+) = (S)-2-ethyl-2-hydroxy-3-oxobutanoate + NADPH + H(+). It functions in the pathway amino-acid biosynthesis; L-isoleucine biosynthesis; L-isoleucine from 2-oxobutanoate: step 2/4. Its pathway is amino-acid biosynthesis; L-valine biosynthesis; L-valine from pyruvate: step 2/4. Involved in the biosynthesis of branched-chain amino acids (BCAA). Catalyzes an alkyl-migration followed by a ketol-acid reduction of (S)-2-acetolactate (S2AL) to yield (R)-2,3-dihydroxy-isovalerate. In the isomerase reaction, S2AL is rearranged via a Mg-dependent methyl migration to produce 3-hydroxy-3-methyl-2-ketobutyrate (HMKB). In the reductase reaction, this 2-ketoacid undergoes a metal-dependent reduction by NADPH to yield (R)-2,3-dihydroxy-isovalerate. This is Ketol-acid reductoisomerase (NADP(+)) from Prochlorococcus marinus (strain NATL1A).